Consider the following 82-residue polypeptide: Exodeoxyribonuclease 7 small subunit (82 aa).

The protein belongs to the XseB family. Heterooligomer composed of large and small subunits.

It is found in the cytoplasm. The enzyme catalyses Exonucleolytic cleavage in either 5'- to 3'- or 3'- to 5'-direction to yield nucleoside 5'-phosphates.. In terms of biological role, bidirectionally degrades single-stranded DNA into large acid-insoluble oligonucleotides, which are then degraded further into small acid-soluble oligonucleotides. This is Exodeoxyribonuclease 7 small subunit from Mannheimia succiniciproducens (strain KCTC 0769BP / MBEL55E).